Consider the following 218-residue polypeptide: Probable nicotinate-nucleotide adenylyltransferase (218 aa).

It belongs to the NadD family.

It catalyses the reaction nicotinate beta-D-ribonucleotide + ATP + H(+) = deamido-NAD(+) + diphosphate. Its pathway is cofactor biosynthesis; NAD(+) biosynthesis; deamido-NAD(+) from nicotinate D-ribonucleotide: step 1/1. Functionally, catalyzes the reversible adenylation of nicotinate mononucleotide (NaMN) to nicotinic acid adenine dinucleotide (NaAD). The polypeptide is Probable nicotinate-nucleotide adenylyltransferase (Sodalis glossinidius (strain morsitans)).